The chain runs to 174 residues: MTKLIIMMMCLIMSFIFMQMKHPLSMGLMLLIQTFLTCLITGIYVKSFWFSYVLFLIFLGGMLILFIYVTSLSSNEMFTMSFKLTMFSLVLFSLSMVIFFILDKTLIEQFIINMEMEKFSMTNNLINENILSLNKMYNFPTNLITLLLINYLFLTLLVTVKITKKFYGPLRPMN.

A run of 4 helical transmembrane segments spans residues 25–45, 48–68, 82–102, and 143–163; these read SMGLMLLIQTFLTCLITGIYV, FWFSYVLFLIFLGGMLILFIY, FKLTMFSLVLFSLSMVIFFIL, and LITLLLINYLFLTLLVTVKIT.

The protein belongs to the complex I subunit 6 family.

The protein localises to the mitochondrion membrane. It catalyses the reaction a ubiquinone + NADH + 5 H(+)(in) = a ubiquinol + NAD(+) + 4 H(+)(out). Functionally, core subunit of the mitochondrial membrane respiratory chain NADH dehydrogenase (Complex I) that is believed to belong to the minimal assembly required for catalysis. Complex I functions in the transfer of electrons from NADH to the respiratory chain. The immediate electron acceptor for the enzyme is believed to be ubiquinone. This Anopheles gambiae (African malaria mosquito) protein is NADH-ubiquinone oxidoreductase chain 6 (mt:ND6).